We begin with the raw amino-acid sequence, 653 residues long: 2-oxoglutarate oxidoreductase subunit KorA (653 aa).

The interval 1 to 21 is disordered; it reads MDPNGSGAGPESHDAAFHAAP. Over residues 11–21 the composition is skewed to basic and acidic residues; that stretch reads ESHDAAFHAAP.

As to quaternary structure, KG oxidoreductase (KOR) is composed of KorA and KorB subunits.

It catalyses the reaction 2 oxidized [2Fe-2S]-[ferredoxin] + 2-oxoglutarate + CoA = succinyl-CoA + 2 reduced [2Fe-2S]-[ferredoxin] + CO2 + H(+). Its pathway is carbohydrate metabolism; tricarboxylic acid cycle. Component of KG oxidoreductase (KOR) that catalyzes the CoA-dependent oxidative decarboxylation of 2-oxoglutarate (alpha-ketoglutarate, KG) to succinyl-CoA. Methyl viologen can act as electron acceptor in vitro; the physiologic electron acceptor is unknown. Is involved in the alternative TCA pathway that functions concurrently with fatty acid beta-oxidation. Since a growing body of evidence indicates that lipids (for example cholesterol and fatty acids) are a predominant growth substrate for M.tuberculosis during infection, flux through KOR likely represents an important step in intermediary metabolism in vivo. KOR-dependent decarboxylation of KG also appears to be an important source of CO(2) in M.tuberculosis metabolism. The sequence is that of 2-oxoglutarate oxidoreductase subunit KorA (korA) from Mycobacterium tuberculosis (strain ATCC 25618 / H37Rv).